Here is a 94-residue protein sequence, read N- to C-terminus: Pyrimidine/purine nucleoside phosphorylase (94 aa).

The protein belongs to the nucleoside phosphorylase PpnP family.

It catalyses the reaction a purine D-ribonucleoside + phosphate = a purine nucleobase + alpha-D-ribose 1-phosphate. It carries out the reaction adenosine + phosphate = alpha-D-ribose 1-phosphate + adenine. The catalysed reaction is cytidine + phosphate = cytosine + alpha-D-ribose 1-phosphate. The enzyme catalyses guanosine + phosphate = alpha-D-ribose 1-phosphate + guanine. It catalyses the reaction inosine + phosphate = alpha-D-ribose 1-phosphate + hypoxanthine. It carries out the reaction thymidine + phosphate = 2-deoxy-alpha-D-ribose 1-phosphate + thymine. The catalysed reaction is uridine + phosphate = alpha-D-ribose 1-phosphate + uracil. The enzyme catalyses xanthosine + phosphate = alpha-D-ribose 1-phosphate + xanthine. In terms of biological role, catalyzes the phosphorolysis of diverse nucleosides, yielding D-ribose 1-phosphate and the respective free bases. Can use uridine, adenosine, guanosine, cytidine, thymidine, inosine and xanthosine as substrates. Also catalyzes the reverse reactions. The protein is Pyrimidine/purine nucleoside phosphorylase of Salmonella newport (strain SL254).